The sequence spans 526 residues: ATP synthase subunit alpha (526 aa).

171-178 (GDRQTGKT) contacts ATP.

Belongs to the ATPase alpha/beta chains family. In terms of assembly, F-type ATPases have 2 components, CF(1) - the catalytic core - and CF(0) - the membrane proton channel. CF(1) has five subunits: alpha(3), beta(3), gamma(1), delta(1), epsilon(1). CF(0) has four main subunits: a(1), b(1), b'(1) and c(9-12).

Its subcellular location is the cell inner membrane. The enzyme catalyses ATP + H2O + 4 H(+)(in) = ADP + phosphate + 5 H(+)(out). Its function is as follows. Produces ATP from ADP in the presence of a proton gradient across the membrane. The alpha chain is a regulatory subunit. The chain is ATP synthase subunit alpha from Chlorobium chlorochromatii (strain CaD3).